We begin with the raw amino-acid sequence, 309 residues long: NAD kinase (309 aa).

Aspartate 89 serves as the catalytic Proton acceptor. Residues 89-90, 163-164, histidine 174, arginine 191, aspartate 193, and 204-209 contribute to the NAD(+) site; these read DG, NE, and TAYALS.

Belongs to the NAD kinase family. It depends on a divalent metal cation as a cofactor.

The protein resides in the cytoplasm. The catalysed reaction is NAD(+) + ATP = ADP + NADP(+) + H(+). Involved in the regulation of the intracellular balance of NAD and NADP, and is a key enzyme in the biosynthesis of NADP. Catalyzes specifically the phosphorylation on 2'-hydroxyl of the adenosine moiety of NAD to yield NADP. This is NAD kinase from Shewanella baltica (strain OS185).